The following is a 209-amino-acid chain: Guanylate kinase (209 aa).

The region spanning 9–188 is the Guanylate kinase-like domain; the sequence is GIMLVISSPS…SVHQIKCIFT (180 aa). 16–23 is an ATP binding site; that stretch reads SPSGGGKT.

It belongs to the guanylate kinase family.

The protein resides in the cytoplasm. It catalyses the reaction GMP + ATP = GDP + ADP. Its function is as follows. Essential for recycling GMP and indirectly, cGMP. This Ehrlichia canis (strain Jake) protein is Guanylate kinase.